The following is a 102-amino-acid chain: Putative pterin-4-alpha-carbinolamine dehydratase (102 aa).

This sequence belongs to the pterin-4-alpha-carbinolamine dehydratase family.

The enzyme catalyses (4aS,6R)-4a-hydroxy-L-erythro-5,6,7,8-tetrahydrobiopterin = (6R)-L-erythro-6,7-dihydrobiopterin + H2O. This chain is Putative pterin-4-alpha-carbinolamine dehydratase, found in Burkholderia orbicola (strain MC0-3).